Reading from the N-terminus, the 451-residue chain is Glutamyl-tRNA reductase (451 aa).

Substrate is bound by residues 49-52 (TCNR), Ser-109, 114-116 (EQQ), and Gln-120. The active-site Nucleophile is Cys-50. Residue 190–195 (GAGAMG) participates in NADP(+) binding.

This sequence belongs to the glutamyl-tRNA reductase family. As to quaternary structure, homodimer.

It carries out the reaction (S)-4-amino-5-oxopentanoate + tRNA(Glu) + NADP(+) = L-glutamyl-tRNA(Glu) + NADPH + H(+). The protein operates within porphyrin-containing compound metabolism; protoporphyrin-IX biosynthesis; 5-aminolevulinate from L-glutamyl-tRNA(Glu): step 1/2. In terms of biological role, catalyzes the NADPH-dependent reduction of glutamyl-tRNA(Glu) to glutamate 1-semialdehyde (GSA). This is Glutamyl-tRNA reductase from Mycolicibacterium smegmatis (strain ATCC 700084 / mc(2)155) (Mycobacterium smegmatis).